Reading from the N-terminus, the 255-residue chain is 5-oxoprolinase subunit A (255 aa).

The protein belongs to the LamB/PxpA family. Forms a complex composed of PxpA, PxpB and PxpC.

The enzyme catalyses 5-oxo-L-proline + ATP + 2 H2O = L-glutamate + ADP + phosphate + H(+). Catalyzes the cleavage of 5-oxoproline to form L-glutamate coupled to the hydrolysis of ATP to ADP and inorganic phosphate. The protein is 5-oxoprolinase subunit A of Thermococcus sibiricus (strain DSM 12597 / MM 739).